Consider the following 325-residue polypeptide: E3 ubiquitin-protein ligase EL5 (325 aa).

A disordered region spans residues M1–G29. Over residues S15 to A28 the composition is skewed to low complexity. Residues I38–L58 traverse the membrane as a helical segment. The segment at T70–R105 is disordered. Basic residues predominate over residues R77–S87. Residues G88 to V99 show a composition bias toward gly residues. The RING-type; atypical zinc finger occupies C134–R176. Disordered regions lie at residues G267 to E289 and A303 to N325. Over residues A268 to G281 the composition is skewed to low complexity.

The protein localises to the cell membrane. It carries out the reaction S-ubiquitinyl-[E2 ubiquitin-conjugating enzyme]-L-cysteine + [acceptor protein]-L-lysine = [E2 ubiquitin-conjugating enzyme]-L-cysteine + N(6)-ubiquitinyl-[acceptor protein]-L-lysine.. It functions in the pathway protein modification; protein ubiquitination. Functionally, functions as an E3 ubiquitin-protein ligase in cooperation with the E2 ubiquitin conjugating enzymes UBC5A and UBC5B. Involved in root development. Required for the maintenance of cell viability after the initiation of root primordial formation. May mediate the degradation of cytotoxic proteins produced in root cells after the actions of auxin, cytokinin and jasmonic acid. Mediates 'Lys-48'-linked polyubiquitination of MBP in vitro. This Oryza sativa subsp. japonica (Rice) protein is E3 ubiquitin-protein ligase EL5 (EL5.1).